Reading from the N-terminus, the 326-residue chain is Biotin synthase (326 aa).

One can recognise a Radical SAM core domain in the interval 48–277 (FGAGKVDLCS…SARIRMAGGR (230 aa)). Residues cysteine 66, cysteine 70, and cysteine 73 each contribute to the [4Fe-4S] cluster site. Residues serine 110, cysteine 142, cysteine 202, and arginine 272 each coordinate [2Fe-2S] cluster.

The protein belongs to the radical SAM superfamily. Biotin synthase family. As to quaternary structure, homodimer. [4Fe-4S] cluster serves as cofactor. The cofactor is [2Fe-2S] cluster.

The catalysed reaction is (4R,5S)-dethiobiotin + (sulfur carrier)-SH + 2 reduced [2Fe-2S]-[ferredoxin] + 2 S-adenosyl-L-methionine = (sulfur carrier)-H + biotin + 2 5'-deoxyadenosine + 2 L-methionine + 2 oxidized [2Fe-2S]-[ferredoxin]. The protein operates within cofactor biosynthesis; biotin biosynthesis; biotin from 7,8-diaminononanoate: step 2/2. In terms of biological role, catalyzes the conversion of dethiobiotin (DTB) to biotin by the insertion of a sulfur atom into dethiobiotin via a radical-based mechanism. This chain is Biotin synthase, found in Heliobacterium modesticaldum (strain ATCC 51547 / Ice1).